The chain runs to 230 residues: Cytochrome b6-f complex iron-sulfur subunit, chloroplastic (230 aa).

The N-terminal 51 residues, 1–51 (MASFTLSSATPSQLCSSKNGMFAPSLALAKAGRVNVLISKERIRGMKLTCQ), are a transit peptide targeting the chloroplast. The helical transmembrane segment at 73–93 (LLGALSLPTGYMLLPYASFFV) threads the bilayer. A Rieske domain is found at 116–212 (AAEWLKTHAP…CDVDDGKVVF (97 aa)). Positions 158, 160, 176, and 179 each coordinate [2Fe-2S] cluster. An intrachain disulfide couples Cys163 to Cys178.

This sequence belongs to the Rieske iron-sulfur protein family. In terms of assembly, the 4 large subunits of the cytochrome b6-f complex are cytochrome b6, subunit IV (17 kDa polypeptide, petD), cytochrome f and the Rieske protein, while the 4 small subunits are petG, petL, petM and petN. The complex functions as a dimer. [2Fe-2S] cluster is required as a cofactor.

The protein localises to the plastid. It localises to the chloroplast thylakoid membrane. It carries out the reaction 2 oxidized [plastocyanin] + a plastoquinol + 2 H(+)(in) = 2 reduced [plastocyanin] + a plastoquinone + 4 H(+)(out). Its function is as follows. Component of the cytochrome b6-f complex, which mediates electron transfer between photosystem II (PSII) and photosystem I (PSI), cyclic electron flow around PSI, and state transitions. In Spinacia oleracea (Spinach), this protein is Cytochrome b6-f complex iron-sulfur subunit, chloroplastic (petC).